A 123-amino-acid chain; its full sequence is Large ribosomal subunit protein uL18 (123 aa).

The protein belongs to the universal ribosomal protein uL18 family. As to quaternary structure, part of the 50S ribosomal subunit; part of the 5S rRNA/L5/L18/L25 subcomplex. Contacts the 5S and 23S rRNAs.

Its function is as follows. This is one of the proteins that bind and probably mediate the attachment of the 5S RNA into the large ribosomal subunit, where it forms part of the central protuberance. The protein is Large ribosomal subunit protein uL18 of Chlamydia abortus (strain DSM 27085 / S26/3) (Chlamydophila abortus).